The sequence spans 170 residues: Orotate phosphoribosyltransferase (170 aa).

5-phospho-alpha-D-ribose 1-diphosphate contacts are provided by residues arginine 86, lysine 87, lysine 90, histidine 92, and glutamate 111–serine 119. Positions 115 and 143 each coordinate orotate.

It belongs to the purine/pyrimidine phosphoribosyltransferase family. PyrE subfamily. Homodimer. Mg(2+) serves as cofactor.

It catalyses the reaction orotidine 5'-phosphate + diphosphate = orotate + 5-phospho-alpha-D-ribose 1-diphosphate. Its pathway is pyrimidine metabolism; UMP biosynthesis via de novo pathway; UMP from orotate: step 1/2. Its function is as follows. Catalyzes the transfer of a ribosyl phosphate group from 5-phosphoribose 1-diphosphate to orotate, leading to the formation of orotidine monophosphate (OMP). This is Orotate phosphoribosyltransferase from Methanoculleus marisnigri (strain ATCC 35101 / DSM 1498 / JR1).